We begin with the raw amino-acid sequence, 291 residues long: Probable S-adenosylmethionine-dependent methyltransferase CRG1 (291 aa).

This sequence belongs to the methyltransferase superfamily.

The protein localises to the cytoplasm. Its function is as follows. Probable S-adenosylmethionine-dependent methyltransferase which mediates cantharidin resistance. The polypeptide is Probable S-adenosylmethionine-dependent methyltransferase CRG1 (CRG1) (Saccharomyces cerevisiae (strain ATCC 204508 / S288c) (Baker's yeast)).